The sequence spans 118 residues: Ribonuclease P protein component (118 aa).

It belongs to the RnpA family. Consists of a catalytic RNA component (M1 or rnpB) and a protein subunit.

It carries out the reaction Endonucleolytic cleavage of RNA, removing 5'-extranucleotides from tRNA precursor.. Functionally, RNaseP catalyzes the removal of the 5'-leader sequence from pre-tRNA to produce the mature 5'-terminus. It can also cleave other RNA substrates such as 4.5S RNA. The protein component plays an auxiliary but essential role in vivo by binding to the 5'-leader sequence and broadening the substrate specificity of the ribozyme. The sequence is that of Ribonuclease P protein component from Shewanella amazonensis (strain ATCC BAA-1098 / SB2B).